We begin with the raw amino-acid sequence, 623 residues long: MTDYDVIVIGGGHAGCEAASASARLGARTVLITHKMDTIGVMSCNPAIGGLGKGHLVREIDALDGLMGRVADAAGIQFRLLNRRKGPAVRGPRTQADRKLYREAMQREISGIENLSVIEGDAFDLLTEDGVVCGTAMKDGRIFRAAAVVLTTGTFLKGLIHIGQRKIPAGRVGEEPSLGLSGTLRRFGLQLGRLKTGTPARLDGRTIDWDRVGRQGPDENPVPFSFMTDAIINRQIDCGVTRTTDATHKIIADNIHQSAMYSGQIEGVGPRYCPSIEDKIVRFGERDGHQIFLEPEGLDDDTVYPNGISTSLPEDVQDAFIRTIPGLEQVKILQPGYAIEYDHVDPRELELSLGVRKMPGLFLAGQINGTTGYEEAGAQGLVAGLNAALRSIGRAPHFFSRTDSYIGVMIDDLTSRGITEPYRMFTSRAEYRLSLRADNADMRLTPAGITLGCVGDARRQRFEAWKHSYETGRTLLQSLSVTPSEGKRFGLKLNQDGQRRTAFDILSYPDQSIAALKPLWPELQTIPAGVVEALEIDAAYAVYMERQATDIAGVRRDENTSIPDDFDYEVLPGLSNELKQKLAQHKPRNLAQAMKVDGVTPAAISLILSWLRRQVRQAQRVGG.

10-15 (GGGHAG) contributes to the FAD binding site. Residue 269–283 (GPRYCPSIEDKIVRF) coordinates NAD(+).

Belongs to the MnmG family. As to quaternary structure, homodimer. Heterotetramer of two MnmE and two MnmG subunits. The cofactor is FAD.

It localises to the cytoplasm. Its function is as follows. NAD-binding protein involved in the addition of a carboxymethylaminomethyl (cmnm) group at the wobble position (U34) of certain tRNAs, forming tRNA-cmnm(5)s(2)U34. In Rhizobium meliloti (strain 1021) (Ensifer meliloti), this protein is tRNA uridine 5-carboxymethylaminomethyl modification enzyme MnmG.